We begin with the raw amino-acid sequence, 141 residues long: Large ribosomal subunit protein uL11 (141 aa).

This sequence belongs to the universal ribosomal protein uL11 family. In terms of assembly, part of the ribosomal stalk of the 50S ribosomal subunit. Interacts with L10 and the large rRNA to form the base of the stalk. L10 forms an elongated spine to which L12 dimers bind in a sequential fashion forming a multimeric L10(L12)X complex. In terms of processing, one or more lysine residues are methylated.

Its function is as follows. Forms part of the ribosomal stalk which helps the ribosome interact with GTP-bound translation factors. This chain is Large ribosomal subunit protein uL11, found in Clostridium botulinum (strain Alaska E43 / Type E3).